The primary structure comprises 41 residues: Large ribosomal subunit protein bL36 (41 aa).

The protein belongs to the bacterial ribosomal protein bL36 family.

This is Large ribosomal subunit protein bL36 from Rhizobium rhizogenes (strain K84 / ATCC BAA-868) (Agrobacterium radiobacter).